The chain runs to 116 residues: MQEVVTGKRAELLSAEFLKKNNLTIICKNYRIDGGEVDIIARDGHYWVFCEVKFRDDESFAAVIEQIQPQQCRRIRYTARHYLLSNNIDEHTAAIRFDVIAIVGQPTKIEWFKDAF.

Belongs to the UPF0102 family.

This Idiomarina loihiensis (strain ATCC BAA-735 / DSM 15497 / L2-TR) protein is UPF0102 protein IL0423.